A 168-amino-acid polypeptide reads, in one-letter code: Photosystem I assembly protein Ycf3 (168 aa).

TPR repeat units follow at residues 35-68, 72-105, and 120-153; these read AFTYYRDGMSAQSEGEYAEALQNYYEAMRLEIDP, SYILYNIGLIHTSNGEHAKALEYYFQALERNPSL, and GEQAIQQGDSETSEAWFNQAADYWKQAIALAPSN.

The protein belongs to the Ycf3 family.

The protein resides in the plastid. It is found in the chloroplast thylakoid membrane. Essential for the assembly of the photosystem I (PSI) complex. May act as a chaperone-like factor to guide the assembly of the PSI subunits. The chain is Photosystem I assembly protein Ycf3 from Physcomitrium patens (Spreading-leaved earth moss).